Reading from the N-terminus, the 269-residue chain is Tryptophan synthase alpha chain (269 aa).

Residues E56 and D67 each act as proton acceptor in the active site.

This sequence belongs to the TrpA family. Tetramer of two alpha and two beta chains.

The catalysed reaction is (1S,2R)-1-C-(indol-3-yl)glycerol 3-phosphate + L-serine = D-glyceraldehyde 3-phosphate + L-tryptophan + H2O. Its pathway is amino-acid biosynthesis; L-tryptophan biosynthesis; L-tryptophan from chorismate: step 5/5. Functionally, the alpha subunit is responsible for the aldol cleavage of indoleglycerol phosphate to indole and glyceraldehyde 3-phosphate. The protein is Tryptophan synthase alpha chain of Mycobacterium ulcerans (strain Agy99).